The following is a 282-amino-acid chain: Acyl-CoA-binding domain-containing protein 6 (282 aa).

Positions 1–31 are disordered; it reads MASSFLPAGAITGDSGGELSSGDDSGEVEFP. An ACB domain is found at 42 to 127; the sequence is LAELFEKAAA…VKKLDPGWNP (86 aa). Residues 69-73 and Lys-95 each bind an acyl-CoA; that span reads YARYK. The residue at position 106 (Ser-106) is a Phosphoserine. Tyr-114 contacts an acyl-CoA. ANK repeat units follow at residues 191–220 and 224–253; these read EGRA…DINC and EGQT…DPTL.

As to quaternary structure, monomer. Detected in placenta and spleen (at protein level). Detected in placenta, umbilical cord blood, CD34-positive hematopoietic progenitor cells and bone marrow.

It localises to the cytoplasm. The protein localises to the nucleus. Functionally, binds long-chain acyl-coenzyme A molecules with a strong preference for unsaturated C18:1-CoA, lower affinity for unsaturated C20:4-CoA, and very weak affinity for saturated C16:0-CoA. Does not bind fatty acids. Plays a role in protein N-myristoylation. This chain is Acyl-CoA-binding domain-containing protein 6 (ACBD6), found in Homo sapiens (Human).